Reading from the N-terminus, the 972-residue chain is DNA topoisomerase 1 (972 aa).

2 disordered regions span residues Met-1–Lys-210 and His-300–Ala-416. Residues Ile-11–Gly-31 show a composition bias toward polar residues. Basic residues predominate over residues His-32 to Ser-50. Composition is skewed to basic and acidic residues over residues Ser-51–Ser-65, Ser-72–Lys-86, and Lys-93–Gly-103. Positions Ser-104–Ser-114 are enriched in low complexity. The span at Ser-125–Ser-138 shows a compositional bias: basic residues. Basic and acidic residues predominate over residues Lys-139–Gly-151. Residues Ser-173–Ser-183 show a composition bias toward low complexity. Ser-303 carries the phosphoserine modification. A Phosphotyrosine modification is found at Tyr-304. The span at His-316 to Val-330 shows a compositional bias: acidic residues. Interaction with DNA regions lie at residues Lys-648–Tyr-649, Arg-711–Lys-716, and Thr-807–Lys-809. Positions Ser-655–Phe-972 constitute a Topo IB-type catalytic domain. Tyr-930 serves as the catalytic O-(3'-phospho-DNA)-tyrosine intermediate.

This sequence belongs to the type IB topoisomerase family. As to quaternary structure, interacts with Topors.

Its subcellular location is the nucleus. It localises to the cytoplasm. It carries out the reaction ATP-independent breakage of single-stranded DNA, followed by passage and rejoining.. In terms of biological role, releases the supercoiling and torsional tension of DNA introduced during the DNA replication and transcription by transiently cleaving and rejoining one strand of the DNA duplex. Introduces a single-strand break via transesterification at a target site in duplex DNA. The scissile phosphodiester is attacked by the catalytic tyrosine of the enzyme, resulting in the formation of a DNA-(3'-phosphotyrosyl)-enzyme intermediate and the expulsion of a 5'-OH DNA strand. The free DNA strand then undergoes passage around the unbroken strand thus removing DNA supercoils. Finally, in the religation step, the DNA 5'-OH attacks the covalent intermediate to expel the active-site tyrosine and restore the DNA phosphodiester backbone. The polypeptide is DNA topoisomerase 1 (Drosophila melanogaster (Fruit fly)).